A 631-amino-acid chain; its full sequence is Peptidyl-prolyl cis-trans isomerase CYP71 (631 aa).

The segment at 26-45 (VEEEEPMVGPGPAPRGKRKR) is disordered. 4 WD repeats span residues 68–106 (MHRD…IEFA), 111–150 (SHLG…MMAM), 201–240 (IHMN…FPED), and 257–297 (KCKT…RRVY). The PPIase cyclophilin-type domain occupies 474-628 (LPENVIMHTT…QDVKILNVTV (155 aa)).

The protein belongs to the cyclophilin-type PPIase family. Interacts with FAS1 and LHP1. Interacts (via WD repeat domain) with histone H3. In terms of tissue distribution, ubiquitous. Expressed in the meristems.

The protein localises to the nucleus. The enzyme catalyses [protein]-peptidylproline (omega=180) = [protein]-peptidylproline (omega=0). In terms of biological role, PPIases accelerate the folding of proteins. It catalyzes the cis-trans isomerization of proline imidic peptide bonds in oligopeptides. Histone proline isomerase that increases the rate of cis-trans isomerization of the synthetic histone H3 peptides H3P30 (RKSAP30F-p-nitroanilide) and H3P30K27me3 (RKme3-SAP30F-p-nitroanilide) in the histone H3 N-terminal tail, in vitro. Histone remodeling factor involved in chromatin-based gene silencing. Reinforces H3K27 methylation. Involved in fundamental processes of chromatin assembly and histone modification by mediating the targeting of FAS1 and LHP1 on the chromatin. Required for the formation and development of leaves, for normal phyllotaxy and for the formation, maintenance and activity of root and shoot apical meristems. This chain is Peptidyl-prolyl cis-trans isomerase CYP71, found in Arabidopsis thaliana (Mouse-ear cress).